A 138-amino-acid chain; its full sequence is Transcription antitermination protein NusB (138 aa).

This sequence belongs to the NusB family.

Its function is as follows. Involved in transcription antitermination. Required for transcription of ribosomal RNA (rRNA) genes. Binds specifically to the boxA antiterminator sequence of the ribosomal RNA (rrn) operons. This chain is Transcription antitermination protein NusB, found in Yersinia pseudotuberculosis serotype O:1b (strain IP 31758).